The chain runs to 284 residues: UPF0276 protein PA3283 (284 aa).

This sequence belongs to the UPF0276 family.

The protein is UPF0276 protein PA3283 of Pseudomonas aeruginosa (strain ATCC 15692 / DSM 22644 / CIP 104116 / JCM 14847 / LMG 12228 / 1C / PRS 101 / PAO1).